We begin with the raw amino-acid sequence, 107 residues long: Small ribosomal subunit protein uS17 (107 aa).

Belongs to the universal ribosomal protein uS17 family. In terms of assembly, part of the 30S ribosomal subunit.

One of the primary rRNA binding proteins, it binds specifically to the 5'-end of 16S ribosomal RNA. This chain is Small ribosomal subunit protein uS17, found in Thermotoga petrophila (strain ATCC BAA-488 / DSM 13995 / JCM 10881 / RKU-1).